The sequence spans 619 residues: MKMQTLNFTSSLLFLSFIFLSCALLISSQQSPSQPHSEPPSQLPFEPPVESPFFPPSQPPIFVPPSQPPSLPPSQSQSPSLACKSTPYPKLCRTILNAVKSSPSDPYRYGKFTIKQCLKQASRLSKVITSYARRVESKPGSATAEEIGAVADCGELSELSVNYLETVTTELKTAQVMTAALVEHVNSLLSGVVTNQQTCLDGLVEAKSGFAAAIGSPMGNLTRLYSISLGLVSHALNRNLKRFKASKGKILGGGNSTYREPLETLIKGLRKTCDNDKDCRKTSRNLGELGETSGGSILVSKAVIVGPFKSDNFTTITDAIAAAPNNTRPEDGYFVIYAREGVYEEYIVVPINKKNLMLMGDGINKTIITGNHNVVDGWTTYNCSSFAVVGERFMAVDVTFRNTAGPEKHQAVALRNNAEGSSFYRCSFEGYQDTLYVHSLRQFYRECDIYGTVDFIFGNAAAIFQNCNIYARKPMAKQKNAITAHGRLDPNQNTGISIINCTIKAAPDLAAEPKSAMTFLGRPWKPYSRTVFMQSYISDIVQPVGWLEWNGTIGLDTIYYGEYSNFGPGANTNQRVQWLGYNLLNLAEAMNFTVYNFTMGDTWLPQTDIPFYGGLLSKE.

The first 23 residues, 1–23, serve as a signal peptide directing secretion; the sequence is MKMQTLNFTSSLLFLSFIFLSCA. Residues 31-84 are disordered; the sequence is SPSQPHSEPPSQLPFEPPVESPFFPPSQPPIFVPPSQPPSLPPSQSQSPSLACK. A compositionally biased stretch (pro residues) spans 37-72; sequence SEPPSQLPFEPPVESPFFPPSQPPIFVPPSQPPSLP. The interval 73 to 231 is pectinesterase inhibitor 25; that stretch reads PSQSQSPSLA…TRLYSISLGL (159 aa). 5 N-linked (GlcNAc...) asparagine glycosylation sites follow: N220, N255, N312, N325, and N364. The interval 302–601 is pectinesterase 25; the sequence is AVIVGPFKSD…FTVYNFTMGD (300 aa). A substrate-binding site is contributed by T380. An N-linked (GlcNAc...) asparagine glycan is attached at N382. Q410 provides a ligand contact to substrate. The active-site Proton donor; for pectinesterase activity is the D433. The cysteines at positions 447 and 467 are disulfide-linked. The active-site Nucleophile; for pectinesterase activity is the D454. N500 carries N-linked (GlcNAc...) asparagine glycosylation. R522 and W524 together coordinate substrate. N-linked (GlcNAc...) asparagine glycosylation is found at N550, N591, and N596.

This sequence in the N-terminal section; belongs to the PMEI family. The protein in the C-terminal section; belongs to the pectinesterase family. As to expression, expressed in siliques.

The protein localises to the secreted. The protein resides in the cell wall. The enzyme catalyses [(1-&gt;4)-alpha-D-galacturonosyl methyl ester](n) + n H2O = [(1-&gt;4)-alpha-D-galacturonosyl](n) + n methanol + n H(+). It participates in glycan metabolism; pectin degradation; 2-dehydro-3-deoxy-D-gluconate from pectin: step 1/5. In terms of biological role, acts in the modification of cell walls via demethylesterification of cell wall pectin. This Arabidopsis thaliana (Mouse-ear cress) protein is Probable pectinesterase/pectinesterase inhibitor 25 (PME25).